The sequence spans 377 residues: tRNA-specific 2-thiouridylase MnmA (377 aa).

ATP is bound by residues 12–19 and Met38; that span reads GMSGGVDS. Residues 98-100 are interaction with target base in tRNA; the sequence is NPD. Catalysis depends on Cys103, which acts as the Nucleophile. Residues Cys103 and Cys200 are joined by a disulfide bond. Gly127 is a binding site for ATP. Residues 150 to 152 are interaction with tRNA; it reads KDQ. Cys200 (cysteine persulfide intermediate) is an active-site residue. The interaction with tRNA stretch occupies residues 313–314; the sequence is RY.

The protein belongs to the MnmA/TRMU family.

The protein localises to the cytoplasm. It catalyses the reaction S-sulfanyl-L-cysteinyl-[protein] + uridine(34) in tRNA + AH2 + ATP = 2-thiouridine(34) in tRNA + L-cysteinyl-[protein] + A + AMP + diphosphate + H(+). Its function is as follows. Catalyzes the 2-thiolation of uridine at the wobble position (U34) of tRNA, leading to the formation of s(2)U34. The protein is tRNA-specific 2-thiouridylase MnmA of Pediococcus pentosaceus (strain ATCC 25745 / CCUG 21536 / LMG 10740 / 183-1w).